A 648-amino-acid polypeptide reads, in one-letter code: Replication restart protein PriA (648 aa).

The Helicase ATP-binding domain occupies 131–297; it reads TILNESNKPT…EIGKYQLVTL (167 aa). An ATP-binding site is contributed by 144–151; that stretch reads GVTGSGKT. Residues 240–243 carry the DEAH box motif; it reads DEEH. Cys-358, Cys-361, Cys-367, Cys-370, Cys-385, Cys-388, Cys-398, and Cys-401 together coordinate Zn(2+). Positions 393-548 constitute a Helicase C-terminal domain; sequence KIFSSCPECL…SFFANELEIR (156 aa).

Belongs to the helicase family. PriA subfamily. Component of the replication restart primosome. Zn(2+) serves as cofactor.

The enzyme catalyses Couples ATP hydrolysis with the unwinding of duplex DNA by translocating in the 3'-5' direction.. It catalyses the reaction ATP + H2O = ADP + phosphate + H(+). In terms of biological role, initiates the restart of stalled replication forks, which reloads the replicative helicase on sites other than the origin of replication. Recognizes and binds to abandoned replication forks and remodels them to uncover a helicase loading site. Promotes assembly of the primosome at these replication forks. The sequence is that of Replication restart protein PriA from Rickettsia felis (strain ATCC VR-1525 / URRWXCal2) (Rickettsia azadi).